The following is a 250-amino-acid chain: 2,3-bisphosphoglycerate-dependent phosphoglycerate mutase (250 aa).

Substrate-binding positions include 10 to 17, 23 to 24, arginine 62, 89 to 92, lysine 100, 116 to 117, and 185 to 186; these read RHGESQWN, TG, ERHY, RR, and GN. Residue histidine 11 is the Tele-phosphohistidine intermediate of the active site. The active-site Proton donor/acceptor is glutamate 89.

Belongs to the phosphoglycerate mutase family. BPG-dependent PGAM subfamily. In terms of assembly, homodimer.

The enzyme catalyses (2R)-2-phosphoglycerate = (2R)-3-phosphoglycerate. It functions in the pathway carbohydrate degradation; glycolysis; pyruvate from D-glyceraldehyde 3-phosphate: step 3/5. Catalyzes the interconversion of 2-phosphoglycerate and 3-phosphoglycerate. The sequence is that of 2,3-bisphosphoglycerate-dependent phosphoglycerate mutase from Citrobacter koseri (strain ATCC BAA-895 / CDC 4225-83 / SGSC4696).